We begin with the raw amino-acid sequence, 537 residues long: Tyrosine-protein kinase Fyn (537 aa).

A lipid anchor (N-myristoyl glycine) is attached at G2. 2 S-palmitoyl cysteine lipidation sites follow: C3 and C6. Phosphothreonine; by PKC is present on T12. A disordered region spans residues 14–35; it reads LTEERDGSLNQSSGYRYGTDPT. 2 positions are modified to phosphoserine: S21 and S26. Positions 82–143 constitute an SH3 domain; the sequence is TGVTLFVALY…PSNYVAPVDS (62 aa). The SH2 domain occupies 149–246; the sequence is WYFGKLGRKD…GLCCRLVVPC (98 aa). The residue at position 185 (Y185) is a Phosphotyrosine. Residues 271–524 enclose the Protein kinase domain; sequence LQLIKRLGNG…YLQGFLEDYF (254 aa). ATP-binding positions include 277 to 285 and K299; that span reads LGNGQFGEV. The active-site Proton acceptor is D390. Y420 is subject to Phosphotyrosine; by autocatalysis. Phosphotyrosine; by CSK is present on Y531.

The protein belongs to the protein kinase superfamily. Tyr protein kinase family. SRC subfamily. Interacts (via its SH3 domain) with PIK3R1 and PRMT8. Interacts with FYB1, PAG1, and SH2D1A. Interacts with CD79A (tyrosine-phosphorylated form); the interaction increases FYN activity. Interacts (via SH2 domain) with CSF1R (tyrosine phosphorylated). Interacts with TOM1L1 (phosphorylated form). Interacts with KDR (tyrosine phosphorylated). Interacts (via SH3 domain) with KLHL2 (via N-terminus). Interacts with SH2D1A and SLAMF1. Interacts with ITCH; the interaction phosphorylates ITCH and negatively regulates its activity. Interacts with FASLG. Interacts with RUNX3. Interacts with KIT. Interacts with EPHA8; possible downstream effector of EPHA8 in regulation of cell adhesion. Interacts with PTK2/FAK1; this interaction leads to PTK2/FAK1 phosphorylation and activation. Interacts with CAV1; this interaction couples integrins to the Ras-ERK pathway. Interacts with UNC119. Interacts (via SH2 domain) with PTPRH (phosphorylated form). Interacts with PTPRO (phosphorylated form). Interacts with PTPRB (phosphorylated form). Interacts with FYB2. Interacts with DSCAM. Interacts with SKAP1 and FYB1; this interaction promotes the phosphorylation of CLNK. Interacts with NEDD9; in the presence of PTK2. The cofactor is Mn(2+). Post-translationally, autophosphorylated at Tyr-420. Phosphorylation on the C-terminal tail at Tyr-531 by CSK maintains the enzyme in an inactive state. PTPRC/CD45 dephosphorylates Tyr-531 leading to activation. Ultraviolet B (UVB) strongly increase phosphorylation at Thr-12 and kinase activity, and promotes translocation from the cytoplasm to the nucleus. Dephosphorylation at Tyr-420 by PTPN2 negatively regulates T-cell receptor signaling. Phosphorylated at tyrosine residues, which can be enhanced by NTN1. In terms of processing, palmitoylated. Palmitoylation at Cys-3 and Cys-6, probably by ZDHHC21, regulates subcellular location.

The protein localises to the cytoplasm. The protein resides in the nucleus. It localises to the cell membrane. Its subcellular location is the perikaryon. It catalyses the reaction L-tyrosyl-[protein] + ATP = O-phospho-L-tyrosyl-[protein] + ADP + H(+). Inhibited by phosphorylation of Tyr-531 by leukocyte common antigen and activated by dephosphorylation of this site. In terms of biological role, non-receptor tyrosine-protein kinase that plays a role in many biological processes including regulation of cell growth and survival, cell adhesion, integrin-mediated signaling, cytoskeletal remodeling, cell motility, immune response and axon guidance. Inactive FYN is phosphorylated on its C-terminal tail within the catalytic domain. Following activation by PKA, the protein subsequently associates with PTK2/FAK1, allowing PTK2/FAK1 phosphorylation, activation and targeting to focal adhesions. Involved in the regulation of cell adhesion and motility through phosphorylation of CTNNB1 (beta-catenin) and CTNND1 (delta-catenin). Regulates cytoskeletal remodeling by phosphorylating several proteins including the actin regulator WAS and the microtubule-associated proteins MAP2 and MAPT. Promotes cell survival by phosphorylating AGAP2/PIKE-A and preventing its apoptotic cleavage. Participates in signal transduction pathways that regulate the integrity of the glomerular slit diaphragm (an essential part of the glomerular filter of the kidney) by phosphorylating several slit diaphragm components including NPHS1, KIRREL1 and TRPC6. Plays a role in neural processes by phosphorylating DPYSL2, a multifunctional adapter protein within the central nervous system, ARHGAP32, a regulator for Rho family GTPases implicated in various neural functions, and SNCA, a small pre-synaptic protein. Involved in reelin signaling by mediating phosphorylation of DAB1 following reelin (RELN)-binding to its receptor. Participates in the downstream signaling pathways that lead to T-cell differentiation and proliferation following T-cell receptor (TCR) stimulation. Phosphorylates PTK2B/PYK2 in response to T-cell receptor activation. Also participates in negative feedback regulation of TCR signaling through phosphorylation of PAG1, thereby promoting interaction between PAG1 and CSK and recruitment of CSK to lipid rafts. CSK maintains LCK and FYN in an inactive form. Promotes CD28-induced phosphorylation of VAV1. In mast cells, phosphorylates CLNK after activation of immunoglobulin epsilon receptor signaling. Can also promote CD244-mediated NK cell activation. The protein is Tyrosine-protein kinase Fyn of Bos taurus (Bovine).